Here is a 178-residue protein sequence, read N- to C-terminus: Cytochrome b6-f complex iron-sulfur subunit (178 aa).

The helical transmembrane segment at 20–42 threads the bilayer; it reads LLTFGSVTGVALGALYPVANYFI. The Rieske domain occupies 65–161; that stretch reads ASGWLSSHPE…VSVENDNVFV (97 aa). Residues cysteine 107, histidine 109, cysteine 125, and histidine 128 each contribute to the [2Fe-2S] cluster site. Cysteine 112 and cysteine 127 are joined by a disulfide.

Belongs to the Rieske iron-sulfur protein family. In terms of assembly, the 4 large subunits of the cytochrome b6-f complex are cytochrome b6, subunit IV (17 kDa polypeptide, PetD), cytochrome f and the Rieske protein, while the 4 small subunits are PetG, PetL, PetM and PetN. The complex functions as a dimer. It depends on [2Fe-2S] cluster as a cofactor.

It is found in the cellular thylakoid membrane. The catalysed reaction is 2 oxidized [plastocyanin] + a plastoquinol + 2 H(+)(in) = 2 reduced [plastocyanin] + a plastoquinone + 4 H(+)(out). Its function is as follows. Component of the cytochrome b6-f complex, which mediates electron transfer between photosystem II (PSII) and photosystem I (PSI), cyclic electron flow around PSI, and state transitions. The sequence is that of Cytochrome b6-f complex iron-sulfur subunit from Synechococcus sp. (strain CC9605).